A 122-amino-acid chain; its full sequence is Acidic phospholipase A2 CbIalpha (122 aa).

Intrachain disulfides connect Cys-26–Cys-115, Cys-28–Cys-44, Cys-43–Cys-95, Cys-49–Cys-122, Cys-50–Cys-88, Cys-57–Cys-81, and Cys-75–Cys-86. Ca(2+)-binding residues include Tyr-27, Gly-29, and Gly-31. Residue His-47 is part of the active site. Ca(2+) is bound at residue Asp-48. Asp-89 is a catalytic residue.

This sequence belongs to the phospholipase A2 family. Group II subfamily. D49 sub-subfamily. As to quaternary structure, heterodimer of an acidic subunit (CbIalpha or CbIbeta) and a basic subunit (CbII). The acidic subunit is non-toxic, and increases the toxicity of the basic subunit. It depends on Ca(2+) as a cofactor. Expressed by the venom gland.

It is found in the secreted. It catalyses the reaction a 1,2-diacyl-sn-glycero-3-phosphocholine + H2O = a 1-acyl-sn-glycero-3-phosphocholine + a fatty acid + H(+). Its function is as follows. Heterodimer: presynaptic neurotoxin. Monomer: Snake venom phospholipase A2 (PLA2) is inactive towards micellar phosphatidylcholine but is weakly active towards non-micellar dithiolecithin. PLA2 catalyzes the calcium-dependent hydrolysis of the 2-acyl groups in 3-sn-phosphoglycerides. The polypeptide is Acidic phospholipase A2 CbIalpha (Pseudocerastes fieldi (Field's horned viper)).